Reading from the N-terminus, the 421-residue chain is Accessory Sec system protein translocase subunit SecY2 (421 aa).

10 helical membrane passes run 17–37, 69–89, 102–122, 139–159, 165–185, 204–224, 254–274, 299–319, 358–378, and 383–403; these read LWTSLIVFIFLIGRNILIPGV, FALGLGPWMSATILWRVLTLI, TFLFKIAIAIIIGFIQSIAII, FGAMATISLIMVSGAVFLVWL, ILGIGGPTVLILASMIINWPT, VILMLVIMISIVFLVLLTVVV, PAGGMPLMYSMTLLVLPQYIL, PLGVTAYIIILFALSIGFAFI, SFVGALYMSLIAGFPLYFGII, and TQYALTAGSIIILVNLVINII.

The protein belongs to the SecY/SEC61-alpha family. SecY2 subfamily. Component of the accessory SecA2/SecY2 protein translocase complex required to export cell wall proteins. May form heterotrimers with SecE and SecG subunits.

It is found in the cell membrane. Functionally, part of the accessory SecA2/SecY2 system specifically required for export of possible cell wall proteins. The central subunit of a protein translocation channel. In Leuconostoc gelidum subsp. gasicomitatum (strain DSM 15947 / CCUG 46042 / CECT 5767 / JCM 12535 / LMG 18811 / NBRC 113245 / TB1-10) (Leuconostoc gasicomitatum), this protein is Accessory Sec system protein translocase subunit SecY2.